Here is a 633-residue protein sequence, read N- to C-terminus: MKLQNSFRDYTAESALFVRRALVAFLGILLLTGVLIANLYNLQIVRFTDYQTRSNENRIKLVPIAPSRGIIYDRNGIPLALNRTIYQIEMMPEKVDNVQQTLDALRSVVDLTDDDIAAFRKERARSHRFTSIPVKTNLTEVQVARFAVNQYRFPGVEVKGYKRRYYPYGSALTHVIGYVSKINDKDVERLNNDGKLANYAATHDIGKLGIERYYEDVLHGQTGYEEVEVNNRGRVIRQLKEVPPQAGHDIYLTLDLKLQQYIETLLAGSRAAVVVTDPRTGGVLALVSTPSYDPNLFVDGISSKDYSALLNDPNTPLVNRATQGVYPPASTVKPYVAVSALSAGVITRNTTLFDPGWWQLPGSEKRYRDWKKWGHGRLNVTRSLEESADTFFYQVAYDMGIDRLSEWMGKFGYGHYTGIDLAEERSGNMPTREWKQKRFKKPWYQGDTIPVGIGQGYWTATPIQMSKALMILINDGIVKVPHLLMSTAEDGKQVPWVQPHEPPVGDIHSGYWELAKDGMYGVANRPNGTAHKYFASAPYKIAAKSGTAQVFGLKANETYNAHKIAERLRDHKLMTAFAPYNNPQVAVAMILENGGAGPAVGTLMRQILDHIMLGDNNTDLPAENPAVAAAEDH.

A helical membrane pass occupies residues 22–42 (LVAFLGILLLTGVLIANLYNL). The Acyl-ester intermediate role is filled by serine 330.

Belongs to the transpeptidase family. MrdA subfamily.

The protein resides in the cell inner membrane. It catalyses the reaction Preferential cleavage: (Ac)2-L-Lys-D-Ala-|-D-Ala. Also transpeptidation of peptidyl-alanyl moieties that are N-acyl substituents of D-alanine.. It functions in the pathway cell wall biogenesis; peptidoglycan biosynthesis. In terms of biological role, catalyzes cross-linking of the peptidoglycan cell wall. This is Peptidoglycan D,D-transpeptidase MrdA from Escherichia coli O157:H7.